A 210-amino-acid chain; its full sequence is Somatotropin (210 aa).

Positions 1–22 are cleaved as a signal peptide; the sequence is MGQVFLLMPVLLVSCFLSQGAA. His-38 serves as a coordination point for Zn(2+). A disulfide bond links Cys-71 and Cys-183. Glu-192 provides a ligand contact to Zn(2+). Cysteines 200 and 208 form a disulfide.

This sequence belongs to the somatotropin/prolactin family.

Its subcellular location is the secreted. Growth hormone plays an important role in growth control and is involved in the regulation of several anabolic processes. Implicated as an osmoregulatory substance important for seawater adaptation. The chain is Somatotropin (gh) from Oncorhynchus keta (Chum salmon).